We begin with the raw amino-acid sequence, 685 residues long: MERLFYPKVVAVIGASPQEGKVGNTIMKNLRNFSGTVYAVNPKYREILGFPCYPSVLKIPENVDLAIIVVPAKLVPKAVEECGRKDVEGAVVISAGFKEAGIEGAKLERELVEVAERYGVKLVGPNCLGMINTEIAMNATFSRVAPEKGRIAFLSQSGAFILAVLEWSKRNGVGFSKVVSLGNKAMLDESDFLEYLAKDDSTDVILIYMEGVEDGRKFMRVAKSVARRKPVVVMKAGKSQSGAKAASSHTGSLAGSYEAYRAAFRQSGVIEASSVEELFDFALLLLKYRKAGNLAILTNSGGPGVMAADACDQFGVPLANFNFETIRKLKEFLPAESNFYNPVDILGDASAERFSRSLQILSEDENVDIVLTILTPTAQMDFLKAAESVVGKNAVCCFMGGESVDESERILRSSGIPNFFDPVRAVRAISVLGRYSKISAKERVKEDLDVSVEREKAEEIIEKLLESGGRVVGAEGLPVLEAYGIEVAPYGIARNVDEARDIAESIGYPVVLKVVSPDVVHKSDVGGVKLNVGENDLEKAFFEILSNVEGRMPKARIEGVLVQKMVDGGKELIVGMKRDPQFGPMIMFGMGGVYVEVLKDVSFRIAPITRREAHEMVREVKAYRILRGLRGEKPADIDAIADLLLRVSKLSLDHPEVLEMDLNPVKVFESGYAVVDFRMVLGEEV.

The ATP-grasp domain maps to Leu477–Lys513. ATP is bound at residue Ala503–Val514.

This sequence in the N-terminal section; belongs to the acetate CoA ligase alpha subunit family. The protein in the C-terminal section; belongs to the acetate CoA ligase beta subunit family. As to quaternary structure, homodimer.

The enzyme catalyses acetate + ATP + CoA = acetyl-CoA + ADP + phosphate. Activity requires divalent metal cations. Its function is as follows. Catalyzes the reversible formation of acetate and ATP from acetyl-CoA by using ADP and phosphate. Can use other substrates such as propionyl-CoA and butyryl-CoA, but not phenylacetyl-CoA. Seems to be involved primarily in the conversion of acetyl-CoA to acetate. Participates in the degradation of branched-chain amino acids via branched-chain-acyl-CoA esters. This Archaeoglobus fulgidus (strain ATCC 49558 / DSM 4304 / JCM 9628 / NBRC 100126 / VC-16) protein is Acetate--CoA ligase [ADP-forming] I.